Reading from the N-terminus, the 501-residue chain is Xylulose kinase (501 aa).

Position 81–82 (81–82 (MH)) interacts with substrate. Residue D239 is the Proton acceptor of the active site.

This sequence belongs to the FGGY kinase family.

The catalysed reaction is D-xylulose + ATP = D-xylulose 5-phosphate + ADP + H(+). Functionally, catalyzes the phosphorylation of D-xylulose to D-xylulose 5-phosphate. The chain is Xylulose kinase from Lactococcus lactis subsp. lactis (strain IL1403) (Streptococcus lactis).